A 361-amino-acid polypeptide reads, in one-letter code: Aminomethyltransferase (361 aa).

It belongs to the GcvT family. As to quaternary structure, the glycine cleavage system is composed of four proteins: P, T, L and H.

It catalyses the reaction N(6)-[(R)-S(8)-aminomethyldihydrolipoyl]-L-lysyl-[protein] + (6S)-5,6,7,8-tetrahydrofolate = N(6)-[(R)-dihydrolipoyl]-L-lysyl-[protein] + (6R)-5,10-methylene-5,6,7,8-tetrahydrofolate + NH4(+). The glycine cleavage system catalyzes the degradation of glycine. The sequence is that of Aminomethyltransferase from Bacteroides fragilis (strain ATCC 25285 / DSM 2151 / CCUG 4856 / JCM 11019 / LMG 10263 / NCTC 9343 / Onslow / VPI 2553 / EN-2).